Reading from the N-terminus, the 300-residue chain is Acetylglutamate kinase (300 aa).

Residues 68 to 69 (GG), R90, and N194 each bind substrate.

It belongs to the acetylglutamate kinase family. ArgB subfamily.

It is found in the cytoplasm. It catalyses the reaction N-acetyl-L-glutamate + ATP = N-acetyl-L-glutamyl 5-phosphate + ADP. Its pathway is amino-acid biosynthesis; L-arginine biosynthesis; N(2)-acetyl-L-ornithine from L-glutamate: step 2/4. Catalyzes the ATP-dependent phosphorylation of N-acetyl-L-glutamate. This chain is Acetylglutamate kinase, found in Methanocella arvoryzae (strain DSM 22066 / NBRC 105507 / MRE50).